We begin with the raw amino-acid sequence, 140 residues long: Callisulfakinin (140 aa).

The first 30 residues, 1 to 30 (MYSQQRIFNSKYFIFFIAVLSIFWLPTMSA), serve as a signal peptide directing secretion. A propeptide spanning residues 31 to 109 (RNLENSKNEN…LEYEDEDRSK (79 aa)) is cleaved from the precursor. Tyr-114 carries the sulfotyrosine modification. Position 119 is a phenylalanine amide (Phe-119). Sulfotyrosine is present on Tyr-131. At Phe-136 the chain carries Phenylalanine amide. Residues 139–140 (SI) constitute a propeptide that is removed on maturation.

The protein belongs to the gastrin/cholecystokinin family. In brain, it is specifically expressed in four pairs of neurons. Not expressed in other cells of the brain and in the thoracico-abdominal ganglion.

The protein localises to the secreted. Its function is as follows. Callisulfakinin I is a neuropeptide. The existence of Callisulfakinin II is uncertain. This is Callisulfakinin from Calliphora vomitoria (Blue bottle fly).